A 450-amino-acid polypeptide reads, in one-letter code: Phosphoglucosamine mutase (450 aa).

Residue Ser104 is the Phosphoserine intermediate of the active site. The Mg(2+) site is built by Ser104, Asp241, Asp243, and Asp245. Ser104 is modified (phosphoserine).

This sequence belongs to the phosphohexose mutase family. The cofactor is Mg(2+). In terms of processing, activated by phosphorylation.

It carries out the reaction alpha-D-glucosamine 1-phosphate = D-glucosamine 6-phosphate. In terms of biological role, catalyzes the conversion of glucosamine-6-phosphate to glucosamine-1-phosphate. In Renibacterium salmoninarum (strain ATCC 33209 / DSM 20767 / JCM 11484 / NBRC 15589 / NCIMB 2235), this protein is Phosphoglucosamine mutase.